Here is a 78-residue protein sequence, read N- to C-terminus: DNA-directed RNA polymerase subunit omega (78 aa).

Belongs to the RNA polymerase subunit omega family. In cyanobacteria the RNAP catalytic core is composed of 2 alpha, 1 beta, 1 beta', 1 gamma and 1 omega subunit. When a sigma factor is associated with the core the holoenzyme is formed, which can initiate transcription.

The enzyme catalyses RNA(n) + a ribonucleoside 5'-triphosphate = RNA(n+1) + diphosphate. Functionally, promotes RNA polymerase assembly. Latches the N- and C-terminal regions of the beta' subunit thereby facilitating its interaction with the beta and alpha subunits. This is DNA-directed RNA polymerase subunit omega from Prochlorococcus marinus (strain AS9601).